A 413-amino-acid chain; its full sequence is Serine hydroxymethyltransferase (413 aa).

(6S)-5,6,7,8-tetrahydrofolate-binding positions include leucine 119 and glycine 123–leucine 125. An N6-(pyridoxal phosphate)lysine modification is found at lysine 228. A (6S)-5,6,7,8-tetrahydrofolate-binding site is contributed by serine 351 to phenylalanine 353.

The protein belongs to the SHMT family. As to quaternary structure, homodimer. It depends on pyridoxal 5'-phosphate as a cofactor.

It localises to the cytoplasm. The enzyme catalyses (6R)-5,10-methylene-5,6,7,8-tetrahydrofolate + glycine + H2O = (6S)-5,6,7,8-tetrahydrofolate + L-serine. Its pathway is one-carbon metabolism; tetrahydrofolate interconversion. It functions in the pathway amino-acid biosynthesis; glycine biosynthesis; glycine from L-serine: step 1/1. Its function is as follows. Catalyzes the reversible interconversion of serine and glycine with tetrahydrofolate (THF) serving as the one-carbon carrier. This reaction serves as the major source of one-carbon groups required for the biosynthesis of purines, thymidylate, methionine, and other important biomolecules. Also exhibits THF-independent aldolase activity toward beta-hydroxyamino acids, producing glycine and aldehydes, via a retro-aldol mechanism. This chain is Serine hydroxymethyltransferase, found in Clostridium botulinum (strain Okra / Type B1).